The sequence spans 223 residues: Small ribosomal subunit protein uS3 (223 aa).

In terms of domain architecture, KH type-2 spans V39–R107.

It belongs to the universal ribosomal protein uS3 family. In terms of assembly, part of the 30S ribosomal subunit. Forms a tight complex with proteins S10 and S14.

Binds the lower part of the 30S subunit head. Binds mRNA in the 70S ribosome, positioning it for translation. This is Small ribosomal subunit protein uS3 from Francisella tularensis subsp. mediasiatica (strain FSC147).